Reading from the N-terminus, the 286-residue chain is Zinc finger protein ZAT5 (286 aa).

3 disordered regions span residues 1–28 (MMMG…RSSS), 40–60 (STSS…EYNS), and 131–171 (GGHR…FKVS). The segment at 115–137 (YECKTCNRTFSSFQALGGHRASH) adopts a C2H2-type 1 zinc-finger fold. The segment covering 154–171 (QPKSSASEEGQNSHFKVS) has biased composition (polar residues). A C2H2-type 2 zinc finger spans residues 190–212 (HECSICGSEFTSGQALGGHMRRH).

In terms of tissue distribution, expressed in flowers and siliques.

The protein localises to the nucleus. Its function is as follows. Probable transcription factor that may be involved in stress responses. The sequence is that of Zinc finger protein ZAT5 (ZAT5) from Arabidopsis thaliana (Mouse-ear cress).